The sequence spans 131 residues: Superoxide dismutase [Ni] (131 aa).

Positions 1–14 (MLSRLFAPKVTVSA) are excised as a propeptide. Residues histidine 15, cysteine 16, and cysteine 20 each coordinate Ni(2+).

It belongs to the nickel superoxide dismutase family. In terms of assembly, homohexamer. The hexameric protein has a roughly the shape of a hollow sphere with an outer diameter of 60 angstroms and a large interior cavity. The cofactor is Ni(2+).

It localises to the cytoplasm. The catalysed reaction is 2 superoxide + 2 H(+) = H2O2 + O2. This is Superoxide dismutase [Ni] (sodN) from Streptomyces coelicolor (strain ATCC BAA-471 / A3(2) / M145).